Here is an 852-residue protein sequence, read N- to C-terminus: DNA mismatch repair protein MutS (852 aa).

An ATP-binding site is contributed by G602–S609.

The protein belongs to the DNA mismatch repair MutS family.

Its function is as follows. This protein is involved in the repair of mismatches in DNA. It is possible that it carries out the mismatch recognition step. This protein has a weak ATPase activity. This chain is DNA mismatch repair protein MutS, found in Streptococcus thermophilus (strain ATCC BAA-491 / LMD-9).